A 60-amino-acid chain; its full sequence is MKNTILLLFTAFIFLMGFFGMSADALADPKADPLAGPFPDADPDPINMKAVAAVAKKPLG.

The first 27 residues, 1–27, serve as a signal peptide directing secretion; that stretch reads MKNTILLLFTAFIFLMGFFGMSADALA. AXPX repeat units follow at residues 27 to 30, 31 to 34, 35 to 38, and 41 to 44; these read ADPK, ADPL, AGPF, and ADPD. Residues 28-45 constitute a propeptide that is removed on maturation; that stretch reads DPKADPLAGPFPDADPDP. Leu59 carries the leucine amide modification.

It belongs to the MCD family. Mastoparan subfamily. In terms of tissue distribution, expressed by the venom gland.

It localises to the secreted. The protein localises to the target cell membrane. Functionally, antimicrobial peptide. Shows activity against both Gram-positive and -negative bacteria, as well against fungi. Also promotes moderate mast cell degranulation. Does not show hemolytic activity on rabbit and human erythrocytes. Its mast cell degranulation activity may be related to the activation of G-protein coupled receptors in mast cells as well as interaction with other proteins located in cell endosomal membranes in the mast cells. This is Mastoparan-VB2 from Vespa bicolor (Black shield wasp).